The chain runs to 485 residues: Protein nucleotidyltransferase YdiU (485 aa).

8 residues coordinate ATP: G90, G92, R93, K113, D125, G126, R176, and R183. The active-site Proton acceptor is D252. Mg(2+) contacts are provided by N253 and D262. An ATP-binding site is contributed by D262.

This sequence belongs to the SELO family. It depends on Mg(2+) as a cofactor. Mn(2+) is required as a cofactor.

It carries out the reaction L-seryl-[protein] + ATP = 3-O-(5'-adenylyl)-L-seryl-[protein] + diphosphate. It catalyses the reaction L-threonyl-[protein] + ATP = 3-O-(5'-adenylyl)-L-threonyl-[protein] + diphosphate. The enzyme catalyses L-tyrosyl-[protein] + ATP = O-(5'-adenylyl)-L-tyrosyl-[protein] + diphosphate. The catalysed reaction is L-histidyl-[protein] + UTP = N(tele)-(5'-uridylyl)-L-histidyl-[protein] + diphosphate. It carries out the reaction L-seryl-[protein] + UTP = O-(5'-uridylyl)-L-seryl-[protein] + diphosphate. It catalyses the reaction L-tyrosyl-[protein] + UTP = O-(5'-uridylyl)-L-tyrosyl-[protein] + diphosphate. Functionally, nucleotidyltransferase involved in the post-translational modification of proteins. It can catalyze the addition of adenosine monophosphate (AMP) or uridine monophosphate (UMP) to a protein, resulting in modifications known as AMPylation and UMPylation. This Vibrio atlanticus (strain LGP32) (Vibrio splendidus (strain Mel32)) protein is Protein nucleotidyltransferase YdiU.